Here is a 408-residue protein sequence, read N- to C-terminus: Putative UPF0496 protein 2 (408 aa).

Transmembrane regions (helical) follow at residues 224 to 244 (RIAR…AIVA) and 252 to 272 (ALVG…GAAR). Positions 385–408 (MARGLPPPSPATVTTTSEERLTSS) are disordered.

Belongs to the UPF0496 family.

The protein resides in the membrane. In Oryza sativa subsp. indica (Rice), this protein is Putative UPF0496 protein 2.